Reading from the N-terminus, the 330-residue chain is tRNA uridine(34) hydroxylase (330 aa).

The Rhodanese domain maps to 123-217 (SDPETILVDT…YLEEVPKEES (95 aa)). The active-site Cysteine persulfide intermediate is the cysteine 177. A disordered region spans residues 310–330 (LNKQQKQQAKEIARKKAKSEI). The span at 317-330 (QAKEIARKKAKSEI) shows a compositional bias: basic and acidic residues.

The protein belongs to the TrhO family.

The catalysed reaction is uridine(34) in tRNA + AH2 + O2 = 5-hydroxyuridine(34) in tRNA + A + H2O. Catalyzes oxygen-dependent 5-hydroxyuridine (ho5U) modification at position 34 in tRNAs. In Francisella philomiragia subsp. philomiragia (strain ATCC 25017 / CCUG 19701 / FSC 153 / O#319-036), this protein is tRNA uridine(34) hydroxylase.